The primary structure comprises 468 residues: UDP-N-acetylmuramate--L-alanine ligase (468 aa).

114-120 (GTHGKTT) contributes to the ATP binding site.

The protein belongs to the MurCDEF family.

It is found in the cytoplasm. It catalyses the reaction UDP-N-acetyl-alpha-D-muramate + L-alanine + ATP = UDP-N-acetyl-alpha-D-muramoyl-L-alanine + ADP + phosphate + H(+). It functions in the pathway cell wall biogenesis; peptidoglycan biosynthesis. In terms of biological role, cell wall formation. The protein is UDP-N-acetylmuramate--L-alanine ligase of Methylorubrum populi (strain ATCC BAA-705 / NCIMB 13946 / BJ001) (Methylobacterium populi).